Reading from the N-terminus, the 462-residue chain is Metal cation symporter ZIP8 (462 aa).

Residues 1–19 form the signal peptide; sequence MAPGRAVAGLLLLAATGLG. Over 20–132 the chain is Extracellular; the sequence is RPSEGPELAF…PSFSEVWGYG (113 aa). Asn-40, Asn-88, and Asn-96 each carry an N-linked (GlcNAc...) asparagine glycan. A helical membrane pass occupies residues 133–153; sequence FLSVTIINLASLLGLILTPLI. Residues 154 to 160 lie on the Cytoplasmic side of the membrane; sequence KKSYFPK. Residues 161 to 181 form a helical membrane-spanning segment; that stretch reads ILTYFVGLAIGTLFSNAIFQL. Residues 182 to 191 lie on the Extracellular side of the membrane; it reads IPEAFGFNPK. A helical membrane pass occupies residues 192-212; that stretch reads IDNYVEKAVAVFGGFYMLFFV. Residues 213–367 are Cytoplasmic-facing; it reads ERTLKMLLKT…LNAGMSTRQA (155 aa). The short motif at 345–350 is the XEXPHE-motif element; sequence EEFPHE. Residues 368–388 form a helical membrane-spanning segment; it reads LLFNFLSACSCYVGLAFGILV. Topologically, residues 389 to 390 are extracellular; it reads GN. The chain crosses the membrane as a helical span at residues 391–411; it reads NFAPNIIFALAGGMFLYISLA. The Cytoplasmic portion of the chain corresponds to 412-431; it reads DMFPEMNDMLREKVTGRQTD. Residues 432-452 form a helical membrane-spanning segment; that stretch reads FTFFMIQNAGMLTGFTAILLI. Residues 453–462 are Extracellular-facing; the sequence is TLYAGDIELQ.

This sequence belongs to the ZIP transporter (TC 2.A.5) family. Homodimer. N-glycosylated. N-glycosylation is not required for proper iron and zinc transport.

It localises to the cell membrane. The protein resides in the lysosome membrane. Its subcellular location is the apical cell membrane. The protein localises to the basolateral cell membrane. The enzyme catalyses Zn(2+)(out) + 2 hydrogencarbonate(out) = Zn(2+)(in) + 2 hydrogencarbonate(in). It catalyses the reaction selenite(out) + Zn(2+)(out) + hydrogencarbonate(out) = selenite(in) + Zn(2+)(in) + hydrogencarbonate(in). The catalysed reaction is Mn(2+)(out) + 2 hydrogencarbonate(out) = Mn(2+)(in) + 2 hydrogencarbonate(in). It carries out the reaction Fe(2+)(out) + 2 hydrogencarbonate(out) = Fe(2+)(in) + 2 hydrogencarbonate(in). The enzyme catalyses Cd(2+)(out) + 2 hydrogencarbonate(out) = Cd(2+)(in) + 2 hydrogencarbonate(in). It catalyses the reaction Co(2+)(out) + 2 hydrogencarbonate(out) = Co(2+)(in) + 2 hydrogencarbonate(in). Electroneutral divalent metal cation:bicarbonate symporter of the plasma membrane mediating the cellular uptake of zinc and manganese, two divalent metal cations important for development, tissue homeostasis and immunity. Transports an electroneutral complex composed of a divalent metal cation and two bicarbonate anions or alternatively a bicarbonate and a selenite anion. Thereby, it also contributes to the cellular uptake of selenium, an essential trace metal and micronutrient. Also imports cadmium a non-essential metal which is cytotoxic and carcinogenic. May also transport iron and cobalt through membranes. Through zinc import, indirectly regulates the metal-dependent transcription factor MTF1 and the expression of some metalloproteases involved in cartilage catabolism and also probably heart development. Also indirectly regulates the expression of proteins involved in cell morphology and cytoskeleton organization. Indirectly controls innate immune function and inflammatory response by regulating zinc cellular uptake which in turn modulates the expression of genes specific of these processes. Protects, for instance, cells from injury and death at the onset of inflammation. By regulating zinc influx into monocytes also directly modulates their adhesion to endothelial cells and arteries. Reclaims manganese from the bile at the apical membrane of hepatocytes, thereby regulating the activity of the manganese-dependent enzymes through the systemic levels of the nutrient. Also participates in manganese reabsorption in the proximal tubule of the kidney. By mediating the extracellular uptake of manganese by cells of the blood-brain barrier, may also play a role in the transport of the micronutrient to the brain. With manganese cellular uptake also participates in mitochondrial proper function. Finally, also probably functions intracellularly, translocating zinc from lysosome to cytosol to indirectly enhance the expression of specific genes during TCR-mediated T cell activation. In Rattus norvegicus (Rat), this protein is Metal cation symporter ZIP8.